The primary structure comprises 166 residues: MVSFKLPAFLCVAVLSSMALVSHGAVLGLCEGACPEGWVEHKNRCYLHVAEKKTWLDAELNCLHHGGNLASEHSEDEHQFLKDLHKGSDDPFWIGLSAVHEGRSWLWSDGTSASAEGDFSMWNPGEPNDAGGKEDCVHDNYGGQKHWNDIKCDLLFPSICVLRMVE.

Residues 1-24 (MVSFKLPAFLCVAVLSSMALVSHG) form the signal peptide. Cystine bridges form between C34–C45, C62–C160, and C136–C152. In terms of domain architecture, C-type lectin spans 41–161 (HKNRCYLHVA…CDLLFPSICV (121 aa)).

Homodimer; disulfide-linked. In terms of tissue distribution, skin; contained within club cells which are a component of the epidermis in combination with epithelial cells and mucus cells (at protein level).

It localises to the secreted. Its function is as follows. Involved in host defense at the body surface. Causes agglutination and suppresses the growth of the Gram-negative bacterium E.coli K12. Possesses calcium-independent hemagglutinating activity. The protein is Lactose-binding lectin l-2 of Anguilla japonica (Japanese eel).